Consider the following 757-residue polypeptide: uncharacterized protein (757 aa).

This is an uncharacterized protein from Dictyostelium discoideum (Social amoeba).